A 1204-amino-acid chain; its full sequence is Exportin-5 (1204 aa).

Positions Met-1 to Glu-108 are necessary for interaction with Ran. Residue Lys-396 is modified to N6-acetyllysine. Residues Glu-533 to Leu-640 form a necessary for interaction with ILF3 region. Residues Thr-641 to Gln-642 are pre-siRNA binding.

The protein belongs to the exportin family. As to quaternary structure, component of a nuclear export receptor complex composed of XPO5, RAN, dsRNA-binding proteins and dsRNA. Found in a nuclear export complex with XPO5, RAN, EEF1A1, and aminoacylated tRNA. Found in a nuclear export complex with XPO5, RAN, ILF3 and dsRNA. Found in a nuclear export complex with XPO5, RAN and pre-miRNA. Found in a nuclear export complex with XPO5, RAN, ILF3 and minihelix VA1 dsRNA. Found in a nuclear export complex with XPO5, RAN, ILF3, ZNF346 and dsRNA. Interacts with EEF1A1, ILF3, NUP153, NUP214 and ZNF346. Interacts with RAN and cargo proteins in a GTP-dependent manner. Interacts with ADAR/ADAR1 (via DRBM domains). Interacts with SMAD4; mediates nuclear export of SMAD4. Interacts with RAN (GTP-bound form).

Its subcellular location is the nucleus. It localises to the cytoplasm. Functionally, mediates the nuclear export of proteins bearing a double-stranded RNA binding domain (dsRBD) and double-stranded RNAs (cargos). XPO5 in the nucleus binds cooperatively to the RNA and to the GTPase Ran in its active GTP-bound form. Proteins containing dsRBDs can associate with this trimeric complex through the RNA. Docking of this complex to the nuclear pore complex (NPC) is mediated through binding to nucleoporins. Upon transit of a nuclear export complex into the cytoplasm, hydrolysis of Ran-GTP to Ran-GDP (induced by RANBP1 and RANGAP1, respectively) cause disassembly of the complex and release of the cargo from the export receptor. XPO5 then returns to the nuclear compartment by diffusion through the nuclear pore complex, to mediate another round of transport. The directionality of nuclear export is thought to be conferred by an asymmetric distribution of the GTP- and GDP-bound forms of Ran between the cytoplasm and nucleus. Overexpression may in some circumstances enhance RNA-mediated gene silencing (RNAi). Mediates nuclear export of ADAR/ADAR1 in a RanGTP-dependent manner. In terms of biological role, mediates the nuclear export of micro-RNA precursors, which form short hairpins. Also mediates the nuclear export of synthetic short hairpin RNAs used for RNA interference. In some circumstances can also mediate the nuclear export of deacylated and aminoacylated tRNAs. Specifically recognizes dsRNAs that lack a 5'-overhang in a sequence-independent manner, have only a short 3'-overhang, and that have a double-stranded length of at least 15 base-pairs. Binding is dependent on Ran-GTP. The polypeptide is Exportin-5 (Xpo5) (Mus musculus (Mouse)).